We begin with the raw amino-acid sequence, 375 residues long: POU domain, class 3, transcription factor 1-B (375 aa).

3 disordered regions span residues 1–29 (MAAT…RMHQ), 56–139 (MSLT…QPLI), and 151–200 (MLGP…PSSD). Polar residues-rich tracts occupy residues 107 to 117 (VHQQTPSSHAW), 129 to 139 (SPGSNSHQPLI), and 151 to 160 (MLGPQASSLH). Basic and acidic residues predominate over residues 162–178 (SMRDPLHDDPGVHDTHV). The region spanning 194 to 268 (EDAPSSDDLE…LLNKWLEETD (75 aa)) is the POU-specific domain. The segment at residues 286–345 (KRKKRTSIEVGVKGALENHFLKCPKPSAHEITSLADSLQLEKEVVRVWFCNRRQKEKRMT) is a DNA-binding region (homeobox).

This sequence belongs to the POU transcription factor family. Class-3 subfamily.

The protein localises to the nucleus. Its function is as follows. Acts as a transcription factor. May play a role in neuronal differentiation. This is POU domain, class 3, transcription factor 1-B (pou3f1-b) from Xenopus laevis (African clawed frog).